The sequence spans 488 residues: 3-octaprenyl-4-hydroxybenzoate carboxy-lyase (488 aa).

Asn-172 is a binding site for Mn(2+). Prenylated FMN is bound by residues 175-177 (IYR), 189-191 (RWL), and 194-195 (RG). Glu-238 serves as a coordination point for Mn(2+). Residue Asp-287 is the Proton donor of the active site.

It belongs to the UbiD family. As to quaternary structure, homohexamer. Prenylated FMN serves as cofactor. Requires Mn(2+) as cofactor.

It is found in the cell membrane. The enzyme catalyses a 4-hydroxy-3-(all-trans-polyprenyl)benzoate + H(+) = a 2-(all-trans-polyprenyl)phenol + CO2. Its pathway is cofactor biosynthesis; ubiquinone biosynthesis. Functionally, catalyzes the decarboxylation of 3-octaprenyl-4-hydroxy benzoate to 2-octaprenylphenol, an intermediate step in ubiquinone biosynthesis. The chain is 3-octaprenyl-4-hydroxybenzoate carboxy-lyase from Legionella pneumophila (strain Lens).